Reading from the N-terminus, the 362-residue chain is Nuclear hormone receptor family member nhr-77 (362 aa).

The segment at residues 8-82 (DPICPVCEFP…AGMKRNLVKQ (75 aa)) is a DNA-binding region (nuclear receptor). 2 NR C4-type zinc fingers span residues 11-32 (CPVCEFPSNVELHFGGLVCGAC) and 48-69 (CEKNNQCKGMRKNCRACRFDYC). Residues 145-362 (EAEKDVSKIL…KLYIQLGLPF (218 aa)) form the NR LBD domain.

This sequence belongs to the nuclear hormone receptor family.

The protein resides in the nucleus. Its function is as follows. Orphan nuclear receptor. The sequence is that of Nuclear hormone receptor family member nhr-77 (nhr-77) from Caenorhabditis elegans.